Here is a 358-residue protein sequence, read N- to C-terminus: Serine/threonine-protein phosphatase 2A activator 2 (358 aa).

In terms of assembly, interacts with the phosphatase PP2A catalytic subunits PPH21 and PPH22. Forms a ternary complex with PPH21-TAP42.

It localises to the cytoplasm. The enzyme catalyses [protein]-peptidylproline (omega=180) = [protein]-peptidylproline (omega=0). Functionally, PPIases accelerate the folding of proteins. It catalyzes the cis-trans isomerization of proline imidic peptide bonds in oligopeptides. Acts as a regulatory subunit for TAP42-associated PP2A-like phosphatases modulating their activity or substrate specificity, probably by inducing a conformational change in the catalytic subunit, a direct target of the PPIase. Can reactivate inactive phosphatase PP2A-phosphatase methylesterase complexes (PP2Ai) in presence of ATP and Mg(2+) by dissociating the inactive form from the complex. Acts also inhibitory at high concentrations. Involved in the regulation of cell cycle progression, mitotic spindle formation and bud morphogenesis. The sequence is that of Serine/threonine-protein phosphatase 2A activator 2 (RRD2) from Saccharomyces cerevisiae (strain ATCC 204508 / S288c) (Baker's yeast).